Here is a 76-residue protein sequence, read N- to C-terminus: DNA-directed RNA polymerase subunit omega (76 aa).

Belongs to the RNA polymerase subunit omega family. In terms of assembly, the RNAP catalytic core consists of 2 alpha, 1 beta, 1 beta' and 1 omega subunit. When a sigma factor is associated with the core the holoenzyme is formed, which can initiate transcription.

The catalysed reaction is RNA(n) + a ribonucleoside 5'-triphosphate = RNA(n+1) + diphosphate. In terms of biological role, promotes RNA polymerase assembly. Latches the N- and C-terminal regions of the beta' subunit thereby facilitating its interaction with the beta and alpha subunits. In Staphylococcus carnosus (strain TM300), this protein is DNA-directed RNA polymerase subunit omega.